Reading from the N-terminus, the 545-residue chain is Zinc finger protein 697 (545 aa).

Residues 1–143 (MKQEDNQGVC…EQPAPPVLPW (143 aa)) form a disordered region. A Glycyl lysine isopeptide (Lys-Gly) (interchain with G-Cter in SUMO2) cross-link involves residue Lys2. A compositionally biased stretch (acidic residues) spans 23–36 (DFEDSEDREGDPEE). Basic and acidic residues predominate over residues 45–55 (DTNKREGHPEP). Acidic residues-rich tracts occupy residues 79–94 (LSEEEGVSVRGEEDDQ) and 118–135 (EDDDESAGENRLEEEEEQ). 11 consecutive C2H2-type zinc fingers follow at residues 189 to 211 (TICPDCGESFSPGAAFLQHQRIH), 261 to 283 (FRCGECGKGFSRNTYLTNHLRLH), 289 to 311 (NLCADCGKSFSWRADLLKHRRLH), 317 to 339 (YPCPECGEAFSLSSHLLSHRRAH), 353 to 375 (FACGECGKGFVRRSHLANHQRIH), 381 to 403 (HGCGECGKRFSWRSDLVKHQRVH), 409 to 431 (YMCSECGETFSVSSHLFTHKRTH), 437 to 459 (YVCRECGKGFGRNSHLVNHLRVH), 465 to 487 (FRCGQCEKRFSDFSTLTQHQRTH), 493 to 515 (YTCIECGKSFIQSSHLIRHRRIH), and 521 to 543 (HKCAGCGKGFRYKTHLAQHQKLH).

This sequence belongs to the krueppel C2H2-type zinc-finger protein family.

The protein localises to the nucleus. Its function is as follows. RNA-interacting protein with a high number of miRNA targets. Acts as a damage-induced regulator of muscle remodeling by mediating the interferon gamma response in muscle cells. In Homo sapiens (Human), this protein is Zinc finger protein 697.